Here is a 431-residue protein sequence, read N- to C-terminus: Adenylosuccinate lyase (431 aa).

Residues 4–5 (RY), 67–69 (RHD), and 93–94 (TS) each bind N(6)-(1,2-dicarboxyethyl)-AMP. The Proton donor/acceptor role is filled by histidine 141. Glutamine 212 provides a ligand contact to N(6)-(1,2-dicarboxyethyl)-AMP. The Proton donor/acceptor role is filled by serine 262. N(6)-(1,2-dicarboxyethyl)-AMP is bound by residues serine 263, 268–270 (KRN), and 307–311 (SVERV).

This sequence belongs to the lyase 1 family. Adenylosuccinate lyase subfamily. As to quaternary structure, homooligomer. Residues from neighboring subunits contribute catalytic and substrate-binding residues to each active site.

The catalysed reaction is N(6)-(1,2-dicarboxyethyl)-AMP = fumarate + AMP. The enzyme catalyses (2S)-2-[5-amino-1-(5-phospho-beta-D-ribosyl)imidazole-4-carboxamido]succinate = 5-amino-1-(5-phospho-beta-D-ribosyl)imidazole-4-carboxamide + fumarate. It functions in the pathway purine metabolism; AMP biosynthesis via de novo pathway; AMP from IMP: step 2/2. The protein operates within purine metabolism; IMP biosynthesis via de novo pathway; 5-amino-1-(5-phospho-D-ribosyl)imidazole-4-carboxamide from 5-amino-1-(5-phospho-D-ribosyl)imidazole-4-carboxylate: step 2/2. Its function is as follows. Catalyzes two reactions in de novo purine nucleotide biosynthesis. Catalyzes the breakdown of 5-aminoimidazole- (N-succinylocarboxamide) ribotide (SAICAR or 2-[5-amino-1-(5-phospho-beta-D-ribosyl)imidazole-4-carboxamido]succinate) to 5-aminoimidazole-4-carboxamide ribotide (AICAR or 5-amino-1-(5-phospho-beta-D-ribosyl)imidazole-4-carboxamide) and fumarate, and of adenylosuccinate (ADS or N(6)-(1,2-dicarboxyethyl)-AMP) to adenosine monophosphate (AMP) and fumarate. The polypeptide is Adenylosuccinate lyase (purB) (Synechocystis sp. (strain ATCC 27184 / PCC 6803 / Kazusa)).